We begin with the raw amino-acid sequence, 311 residues long: Malate dehydrogenase (311 aa).

Residues 7–13 and aspartate 34 each bind NAD(+); that span reads GAAGGIG. The substrate site is built by arginine 81 and arginine 87. NAD(+) contacts are provided by residues asparagine 94 and 117-119; that span reads ITN. 2 residues coordinate substrate: asparagine 119 and arginine 153. Histidine 177 serves as the catalytic Proton acceptor. An NAD(+)-binding site is contributed by methionine 227.

Belongs to the LDH/MDH superfamily. MDH type 1 family. Homodimer.

The catalysed reaction is (S)-malate + NAD(+) = oxaloacetate + NADH + H(+). Its function is as follows. Catalyzes the reversible oxidation of malate to oxaloacetate. The protein is Malate dehydrogenase of Shewanella loihica (strain ATCC BAA-1088 / PV-4).